The sequence spans 81 residues: MIKSFQLSFTVLIVFTVLILGVVGNVEQKSQDWCWSIVNKDRCLQKECESLCSKKHPKGKFMCIPSTPGGPFQCHCRHPCR.

The first 24 residues, 1 to 24 (MIKSFQLSFTVLIVFTVLILGVVG), serve as a signal peptide directing secretion. Intrachain disulfides connect cysteine 34–cysteine 80, cysteine 43–cysteine 63, cysteine 48–cysteine 74, and cysteine 52–cysteine 76.

It belongs to the DEFL family.

It localises to the secreted. The sequence is that of Putative defensin-like protein 148 (LCR4) from Arabidopsis thaliana (Mouse-ear cress).